Consider the following 345-residue polypeptide: GTPase Obg (345 aa).

Positions 1 to 159 (MKFIDEAIIK…RTLRLELKLL (159 aa)) constitute an Obg domain. The disordered stretch occupies residues 127-148 (NARFKSSTNRAPRKTTQGKPGE). Over residues 130-144 (FKSSTNRAPRKTTQG) the composition is skewed to polar residues. The 175-residue stretch at 160 to 334 (ADVGLLGLPN…LIHAVMQYLE (175 aa)) folds into the OBG-type G domain. GTP-binding positions include 166-173 (GLPNAGKS), 191-195 (FTTLH), 213-216 (DIPG), 284-287 (NKTD), and 315-317 (SAL). Positions 173 and 193 each coordinate Mg(2+).

This sequence belongs to the TRAFAC class OBG-HflX-like GTPase superfamily. OBG GTPase family. As to quaternary structure, monomer. Requires Mg(2+) as cofactor.

It is found in the cytoplasm. Its function is as follows. An essential GTPase which binds GTP, GDP and possibly (p)ppGpp with moderate affinity, with high nucleotide exchange rates and a fairly low GTP hydrolysis rate. Plays a role in control of the cell cycle, stress response, ribosome biogenesis and in those bacteria that undergo differentiation, in morphogenesis control. This chain is GTPase Obg, found in Nitrosococcus oceani (strain ATCC 19707 / BCRC 17464 / JCM 30415 / NCIMB 11848 / C-107).